Reading from the N-terminus, the 953-residue chain is Nonsense-mediated mRNA decay factor SMG8 (953 aa).

Disordered stretches follow at residues 571 to 604 (AQDA…CSQP) and 629 to 653 (PCFD…ESNN). A compositionally biased stretch (acidic residues) spans 574 to 586 (AELDPDEEDEELP). Residues 595–604 (ITQSNGCSQP) are compositionally biased toward polar residues. Residues 634–653 (SSSSEAESTCSGTSSEESNN) show a composition bias toward low complexity.

This sequence belongs to the SMG8 family.

Its function is as follows. Involved in nonsense-mediated decay (NMD) of mRNAs containing premature stop codons. Probable component of kinase complex containing nonC and recruited to stalled ribosomes. In Drosophila persimilis (Fruit fly), this protein is Nonsense-mediated mRNA decay factor SMG8.